Reading from the N-terminus, the 570-residue chain is Methionine--tRNA ligase (570 aa).

The 'HIGH' region signature appears at 14-24 (PYINGIKHLGN). Zn(2+)-binding residues include cysteine 146, cysteine 149, cysteine 159, and cysteine 162. Residues 347 to 351 (QFSTS) carry the 'KMSKS' region motif. Position 350 (threonine 350) interacts with ATP.

The protein belongs to the class-I aminoacyl-tRNA synthetase family. MetG type 1 subfamily. Monomer. Zn(2+) serves as cofactor.

Its subcellular location is the cytoplasm. It carries out the reaction tRNA(Met) + L-methionine + ATP = L-methionyl-tRNA(Met) + AMP + diphosphate. Is required not only for elongation of protein synthesis but also for the initiation of all mRNA translation through initiator tRNA(fMet) aminoacylation. This is Methionine--tRNA ligase from Jannaschia sp. (strain CCS1).